The chain runs to 91 residues: DNA-binding protein HU (91 aa).

This sequence belongs to the bacterial histone-like protein family.

Histone-like DNA-binding protein which is capable of wrapping DNA to stabilize it, and thus to prevent its denaturation under extreme environmental conditions. In Clostridium pasteurianum, this protein is DNA-binding protein HU (hup).